The primary structure comprises 203 residues: V-type ATP synthase subunit D (203 aa).

This sequence belongs to the V-ATPase D subunit family.

Functionally, produces ATP from ADP in the presence of a proton gradient across the membrane. This Chlamydia trachomatis serovar L2 (strain ATCC VR-902B / DSM 19102 / 434/Bu) protein is V-type ATP synthase subunit D.